A 123-amino-acid polypeptide reads, in one-letter code: Small ribosomal subunit protein uS12 (123 aa).

The interval 1-32 (MPTIQQLVRKGRKTKVSKNKTPALKGSPQRRG) is disordered. Residues 9-18 (RKGRKTKVSK) show a composition bias toward basic residues. A 3-methylthioaspartic acid modification is found at Asp-89.

It belongs to the universal ribosomal protein uS12 family. As to quaternary structure, part of the 30S ribosomal subunit. Contacts proteins S8 and S17. May interact with IF1 in the 30S initiation complex.

Functionally, with S4 and S5 plays an important role in translational accuracy. Its function is as follows. Interacts with and stabilizes bases of the 16S rRNA that are involved in tRNA selection in the A site and with the mRNA backbone. Located at the interface of the 30S and 50S subunits, it traverses the body of the 30S subunit contacting proteins on the other side and probably holding the rRNA structure together. The combined cluster of proteins S8, S12 and S17 appears to hold together the shoulder and platform of the 30S subunit. This Thermobifida fusca (strain YX) protein is Small ribosomal subunit protein uS12.